Here is a 453-residue protein sequence, read N- to C-terminus: Probable L-galactonate transporter (453 aa).

The tract at residues 1–23 (MEKENITIDPRSSFTPSSSADIP) is disordered. The Periplasmic portion of the chain corresponds to 1–42 (MEKENITIDPRSSFTPSSSADIPVPPDGLVQRSTRIKRIQTT). The segment covering 10–20 (PRSSFTPSSSA) has biased composition (polar residues). Residues 43–63 (AMLLLFFAAVINYLDRSSLSV) form a helical membrane-spanning segment. Topologically, residues 64–71 (ANLTIREE) are cytoplasmic. A helical membrane pass occupies residues 72-92 (LGLSATEIGALLSVFSLAYGI). Residues 93 to 107 (AQLPCGPLLDRKGPR) are Periplasmic-facing. Residues 108–128 (LMLGLGMFFWSLFQAMSGMVH) traverse the membrane as a helical segment. Over 129-174 (NFTQFVLVRIGMGIGEAPMNPCGVKVINDWFNIKERGRPMGFFNAA) the chain is Cytoplasmic. A helical transmembrane segment spans residues 175–195 (STIGVAVSPPILAAMMLVMGW). Residue R196 is a topological domain, periplasmic. A helical membrane pass occupies residues 197 to 217 (GMFITIGVLGIFLAIGWYMLY). Topologically, residues 218-259 (RNREHVELTAVEQAYLNAGSVNARRDPLSFAEWRSLFRNRTM) are cytoplasmic. Residues 260–280 (WGMMLGFSGINYTAWLYLAWL) traverse the membrane as a helical segment. Over 281–295 (PGYLQTAYNLDLKST) the chain is Periplasmic. A helical membrane pass occupies residues 296-316 (GLMAAIPFLFGAAGMLVNGYV). The Cytoplasmic segment spans residues 317–332 (TDWLVKGGMAPIKSRK). Residues 333–353 (ICIIAGMFCSAAFTLIVPQAT) form a helical membrane-spanning segment. Residues 354–359 (TSMTAV) lie on the Periplasmic side of the membrane. A helical membrane pass occupies residues 360–380 (LLIGMALFCIHFAGTSCWGLI). The Cytoplasmic segment spans residues 381–394 (HVAVASRMTASVGS). Residues 395-415 (IQNFASFICASFAPIITGFIV) form a helical membrane-spanning segment. Residues 416-422 (DTTHSFR) lie on the Periplasmic side of the membrane. Residues 423-443 (LALIICGCVTAAGALAYIFLV) traverse the membrane as a helical segment. The Cytoplasmic portion of the chain corresponds to 444–453 (RQPINDPRKD).

This sequence belongs to the major facilitator superfamily. Phthalate permease family.

It localises to the cell inner membrane. It carries out the reaction L-galactonate(in) + H(+)(in) = L-galactonate(out) + H(+)(out). In terms of biological role, probably responsible for the transport of L-galactonate from the periplasm across the inner membrane. Is essential for growth on L-galactonate as the sole carbon source. The protein is Probable L-galactonate transporter (lgoT) of Escherichia coli (strain K12).